A 204-amino-acid chain; its full sequence is Imidazoleglycerol-phosphate dehydratase (204 aa).

This sequence belongs to the imidazoleglycerol-phosphate dehydratase family.

It localises to the cytoplasm. It carries out the reaction D-erythro-1-(imidazol-4-yl)glycerol 3-phosphate = 3-(imidazol-4-yl)-2-oxopropyl phosphate + H2O. It participates in amino-acid biosynthesis; L-histidine biosynthesis; L-histidine from 5-phospho-alpha-D-ribose 1-diphosphate: step 6/9. This Rhodococcus jostii (strain RHA1) protein is Imidazoleglycerol-phosphate dehydratase.